We begin with the raw amino-acid sequence, 305 residues long: Oxygen-dependent coproporphyrinogen-III oxidase (305 aa).

S92 contacts substrate. Residues H96 and H106 each contribute to the a divalent metal cation site. H106 (proton donor) is an active-site residue. 108–110 (NVR) is a binding site for substrate. Residues H145 and H175 each coordinate a divalent metal cation. Positions 239-274 (YVEFNLLFDRGTLFGLQSGGRAESILISLPPLVRWE) are important for dimerization. 257–259 (GGR) contributes to the substrate binding site.

This sequence belongs to the aerobic coproporphyrinogen-III oxidase family. In terms of assembly, homodimer. Requires a divalent metal cation as cofactor.

It localises to the cytoplasm. The enzyme catalyses coproporphyrinogen III + O2 + 2 H(+) = protoporphyrinogen IX + 2 CO2 + 2 H2O. It participates in porphyrin-containing compound metabolism; protoporphyrin-IX biosynthesis; protoporphyrinogen-IX from coproporphyrinogen-III (O2 route): step 1/1. Its function is as follows. Involved in the heme biosynthesis. Catalyzes the aerobic oxidative decarboxylation of propionate groups of rings A and B of coproporphyrinogen-III to yield the vinyl groups in protoporphyrinogen-IX. The polypeptide is Oxygen-dependent coproporphyrinogen-III oxidase (Xylella fastidiosa (strain 9a5c)).